A 106-amino-acid chain; its full sequence is Cell division protein FtsB (106 aa).

The Cytoplasmic portion of the chain corresponds to 1 to 3 (MGK). Residues 4–21 (LTLLLLVLLGWLQYSLWL) traverse the membrane as a helical segment. The Periplasmic segment spans residues 22-106 (GKNGIHDFVR…GTPSTQNNAQ (85 aa)). Residues 31–62 (RVKEDVAAQEANNSTLKARNDQLFAEIDDLNG) adopt a coiled-coil conformation.

This sequence belongs to the FtsB family. In terms of assembly, part of a complex composed of FtsB, FtsL and FtsQ.

It is found in the cell inner membrane. In terms of biological role, essential cell division protein. May link together the upstream cell division proteins, which are predominantly cytoplasmic, with the downstream cell division proteins, which are predominantly periplasmic. In Yersinia pseudotuberculosis serotype O:1b (strain IP 31758), this protein is Cell division protein FtsB.